The chain runs to 326 residues: Malate dehydrogenase (326 aa).

11 to 17 (GAAGQIG) lines the NAD(+) pocket. Substrate is bound by residues Arg-92 and Arg-98. NAD(+) contacts are provided by residues Asn-105, Gln-112, and 129 to 131 (VGN). Residues Asn-131 and Arg-162 each contribute to the substrate site. Catalysis depends on His-187, which acts as the Proton acceptor.

The protein belongs to the LDH/MDH superfamily. MDH type 2 family.

The catalysed reaction is (S)-malate + NAD(+) = oxaloacetate + NADH + H(+). Its function is as follows. Catalyzes the reversible oxidation of malate to oxaloacetate. This is Malate dehydrogenase from Alkalilimnicola ehrlichii (strain ATCC BAA-1101 / DSM 17681 / MLHE-1).